A 115-amino-acid chain; its full sequence is Large ribosomal subunit protein P1 (115 aa).

A compositionally biased stretch (low complexity) spans 56–73; sequence QAAAAPVPASGGAAAPAE. The disordered stretch occupies residues 56–115; that stretch reads QAAAAPVPASGGAAAPAEGDADEADEADEEAEEEAADDGGDDDDDEDDEASGEGLGELFG. Residues 74–106 are compositionally biased toward acidic residues; that stretch reads GDADEADEADEEAEEEAADDGGDDDDDEDDEAS.

This sequence belongs to the eukaryotic ribosomal protein P1/P2 family. As to quaternary structure, part of the 50S ribosomal subunit. Homodimer, it forms part of the ribosomal stalk which helps the ribosome interact with GTP-bound translation factors. Forms a heptameric uL10/P0(P1)2(P1)2(P1)2 complex, where uL10/P0 forms an elongated spine to which the P1 dimers bind in a sequential fashion.

Its function is as follows. Forms part of the ribosomal stalk, playing a central role in the interaction of the ribosome with GTP-bound translation factors. This chain is Large ribosomal subunit protein P1, found in Haloarcula marismortui (strain ATCC 43049 / DSM 3752 / JCM 8966 / VKM B-1809) (Halobacterium marismortui).